The chain runs to 301 residues: tRNA uridine(34) hydroxylase (301 aa).

Positions 121 to 215 constitute a Rhodanese domain; sequence RSDDVVLIDT…YLEEVPAENS (95 aa). The Cysteine persulfide intermediate role is filled by Cys175.

The protein belongs to the TrhO family.

It carries out the reaction uridine(34) in tRNA + AH2 + O2 = 5-hydroxyuridine(34) in tRNA + A + H2O. Catalyzes oxygen-dependent 5-hydroxyuridine (ho5U) modification at position 34 in tRNAs. The chain is tRNA uridine(34) hydroxylase from Ruegeria pomeroyi (strain ATCC 700808 / DSM 15171 / DSS-3) (Silicibacter pomeroyi).